The sequence spans 743 residues: Photosystem I P700 chlorophyll a apoprotein A2 (743 aa).

Helical transmembrane passes span 46-69 (IFATHFGHVAIIFLWASSLLFHVA), 135-158 (LYMGAVFLLILASVFLFAGWLHLQ), 175-199 (LNHHLAGLFGVSSLAWAGHLIHVAI), 273-291 (MAHHHLAIAVIFIIAGHMY), 336-359 (LHFQLGIHLAALGTITSLVAQHMY), 375-401 (AALYTHHQYIAIFLMLGAFAHGAIFWV), 423-445 (AIISHLSWVSLFLGFHTLGLYVH), and 526-544 (FLVHHAFALALHTTVLILV). Residues C568 and C577 each contribute to the [4Fe-4S] cluster site. Helical transmembrane passes span 584-605 (AFYLATFWALNTVGWVTFYWHW) and 652-674 (LSVWAWMFLFGHLVWATGFMFLI). Chlorophyll a-binding residues include H663, M671, and Y679. W680 provides a ligand contact to phylloquinone. A helical membrane pass occupies residues 716–736 (LVGLTHFTVGYVLTYAAFLIA).

The protein belongs to the PsaA/PsaB family. In terms of assembly, the PsaA/B heterodimer binds the P700 chlorophyll special pair and subsequent electron acceptors. PSI consists of a core antenna complex that captures photons, and an electron transfer chain that converts photonic excitation into a charge separation. The cyanobacterial PSI reaction center is composed of one copy each of PsaA,B,C,D,E,F,I,J,K,L,M and X, and forms trimeric complexes. It depends on PSI electron transfer chain: 5 chlorophyll a, 1 chlorophyll a', 2 phylloquinones and 3 4Fe-4S clusters. PSI core antenna: 90 chlorophyll a, 22 carotenoids, 3 phospholipids and 1 galactolipid. P700 is a chlorophyll a/chlorophyll a' dimer, A0 is one or more chlorophyll a, A1 is one or both phylloquinones and FX is a shared 4Fe-4S iron-sulfur center. as a cofactor.

The protein resides in the cellular thylakoid membrane. It carries out the reaction reduced [plastocyanin] + hnu + oxidized [2Fe-2S]-[ferredoxin] = oxidized [plastocyanin] + reduced [2Fe-2S]-[ferredoxin]. Functionally, psaA and PsaB bind P700, the primary electron donor of photosystem I (PSI), as well as the electron acceptors A0, A1 and FX. PSI is a plastocyanin/cytochrome c6-ferredoxin oxidoreductase, converting photonic excitation into a charge separation, which transfers an electron from the donor P700 chlorophyll pair to the spectroscopically characterized acceptors A0, A1, FX, FA and FB in turn. Oxidized P700 is reduced on the lumenal side of the thylakoid membrane by plastocyanin or cytochrome c6. The chain is Photosystem I P700 chlorophyll a apoprotein A2 from Mastigocladus laminosus (Fischerella sp.).